The following is a 273-amino-acid chain: Cysteine protease S273R (273 aa).

Active-site residues include H168 and N187. Residue Q226 coordinates substrate. C232 (nucleophile) is an active-site residue.

Belongs to the peptidase C63 family.

The protein localises to the host cytoplasm. It localises to the virion. Cysteine protease that plays several role during infection including processing of the structural polyprotein or inhibition of the host immune response. Catalyzes the maturation of the pp220 and pp62 polyprotein precursors into core-shell proteins. Plays a role in the disruption of host pyroptosis via specific cleavage of gasdermin D/GSDMD. In addition, strongly decreases the host cGAS-STING signaling by targeting IKBKE via its enzymatic activity. Also impairs host FOXJ1-mediated antiviral effect via degradation of FOXJ1. Cleaves host G3BP1 inducing loss of stress granules formation. Interacts with and induces the degradation of host STAT2 via polyubiquitination of the latter. The chain is Cysteine protease S273R from Ornithodoros (relapsing fever ticks).